Consider the following 34-residue polypeptide: Tryptophanase operon leader peptide (34 aa).

The protein is Tryptophanase operon leader peptide (tnaL) of Proteus vulgaris.